The chain runs to 328 residues: MSILSTRWFSEQEIEENSIIQQFHMNSIVGEVQEAQYIFPHSFTTNNDPSYDDLIEMKPPKILETTYISPSSHLPPNSKPHHIHRHSSSRILSFEDYGSNDMEHEYSPTYLNSIFSPKLEAQVQPHQKSDEFNRKGTKRAQPFSRNQSNAQDHIIAERKRREKLTQRFVALSALVPGLKKMDKASVLGDALKHIKYLQERVGELEEQKKERRLESMVLVKKSKLILDDNNQSFSSSCEDGFSDLDLPEIEVRFSDEDVLIKILCEKQKGHLAKIMAEIEKLHILITNSSVLNFGPTLDITIIAKKESDFDMTLMDVVKSLRSALSNFI.

A disordered region spans residues P125–D152. Residues S148–L197 form the bHLH domain.

As to quaternary structure, homodimer. In terms of tissue distribution, expressed in flowers.

The protein resides in the nucleus. This Arabidopsis thaliana (Mouse-ear cress) protein is Transcription factor bHLH25 (BHLH25).